A 390-amino-acid chain; its full sequence is Phosphopentomutase (390 aa).

Asp-11, Asp-283, His-288, Asp-324, His-325, and His-336 together coordinate Mn(2+).

It belongs to the phosphopentomutase family. The cofactor is Mn(2+).

Its subcellular location is the cytoplasm. It carries out the reaction 2-deoxy-alpha-D-ribose 1-phosphate = 2-deoxy-D-ribose 5-phosphate. The enzyme catalyses alpha-D-ribose 1-phosphate = D-ribose 5-phosphate. The protein operates within carbohydrate degradation; 2-deoxy-D-ribose 1-phosphate degradation; D-glyceraldehyde 3-phosphate and acetaldehyde from 2-deoxy-alpha-D-ribose 1-phosphate: step 1/2. Its function is as follows. Isomerase that catalyzes the conversion of deoxy-ribose 1-phosphate (dRib-1-P) and ribose 1-phosphate (Rib-1-P) to deoxy-ribose 5-phosphate (dRib-5-P) and ribose 5-phosphate (Rib-5-P), respectively. The sequence is that of Phosphopentomutase from Alkaliphilus oremlandii (strain OhILAs) (Clostridium oremlandii (strain OhILAs)).